The primary structure comprises 94 residues: Non-specific lipid-transfer protein 1 (94 aa).

Disulfide bonds link Cys-4-Cys-53, Cys-14-Cys-30, Cys-31-Cys-76, and Cys-51-Cys-90.

Plant non-specific lipid-transfer proteins transfer phospholipids as well as galactolipids across membranes. May play a role in wax or cutin deposition in the cell walls of expanding epidermal cells and certain secretory tissues. The protein is Non-specific lipid-transfer protein 1 of Amaranthus hypochondriacus (Prince-of-Wales feather).